A 540-amino-acid chain; its full sequence is MAVSSGNSSVNSSKKLFSGKKGQSIGIVRSMNYKIPGTFGLESGKTLSGVRVEYEMYGKMNADKSNVILICHALTGDAHAAGFHEGDKKPGWWEIVIGPNKAFDTEKYCVICSNILGGCKGSTGPSSIDPETGKHYGISFPVITVKDMVNAQKKLIEHLGVKQLFAVAGGSMGGMQVLQWTVSYPEMVRKAIAIATTASTTPQQIAFGAIGRKAITDDPKWNGGDYYGKEIPSQGLALARMIGHITYLSDASMQNKFGRLQQDTDKSGIKGTTGTEGKNSSEISSEISSISSEISSELSYDFTPNFQVESYLNYKGDNFTKRFDANSYLYITKAVDYFDLAKNGSLIEGFSGVTAKYLVISISSDWLYPPYQSQEIVSALTANGVDARYEEIRSQHGHDAFLLEEGQLSYLLRSFLSHILVSDVMNRNFYTVSRDETIEHSSKLMVKECVSHLPVISEDGKLEGIVTSWDITKAVACKINELDEIITRDVKYVYEDEKIEHASSIMEKHSISALPVIDSEHRIIGIVTSESISALFGKYD.

Positions 66-404 (NVILICHALT…QHGHDAFLLE (339 aa)) constitute an AB hydrolase-1 domain. S171 acts as the Nucleophile in catalysis. R240 serves as a coordination point for substrate. Residues 262–284 (QDTDKSGIKGTTGTEGKNSSEIS) are disordered. Residues D365 and H398 contribute to the active site. Substrate is bound at residue D399. 2 CBS domains span residues 425–484 (MNRN…ELDE) and 486–540 (ITRD…GKYD).

It belongs to the AB hydrolase superfamily. MetX family. In terms of assembly, homodimer.

The protein localises to the cytoplasm. It carries out the reaction L-homoserine + acetyl-CoA = O-acetyl-L-homoserine + CoA. Its pathway is amino-acid biosynthesis; L-methionine biosynthesis via de novo pathway; O-acetyl-L-homoserine from L-homoserine: step 1/1. Functionally, transfers an acetyl group from acetyl-CoA to L-homoserine, forming acetyl-L-homoserine. In vitro, can also use propionyl-CoA or butiryl-CoA as acyl donor. The protein is Homoserine O-acetyltransferase of Methanosarcina acetivorans (strain ATCC 35395 / DSM 2834 / JCM 12185 / C2A).